Reading from the N-terminus, the 292-residue chain is MEDSMDMDMSPLRPQNYLFGCELKADKDYHFKVDNDENEHQLSLRTVSLGAGAKDELHIVEAEAMNYEGSPIKVTLATLKMSVQPTVSLGGFEITPPVVLRLKCGSGPVHISGQHLVAVEEDAESEDEDEEDVKLLGMSGKRSAPGGGNKVPQKKVKLDEDDEDDDEDDEDDEDDDDDDFDEEETEEKVPVKKSVRDTPAKNAQKSNQNGKDLKPSTPRSKGQESFKKQEKTPKTPKGPSSVEDIKAKMQASIEKGGSLPKVEAKFINYVKNCFRMTDQEAIQDLWQWRKSL.

The residue at position 1 (Met-1) is an N-acetylmethionine. Residues 1–117 (MEDSMDMDMS…PVHISGQHLV (117 aa)) form a necessary for interaction with APEX1 region. The required for interaction with SENP3 stretch occupies residues 1 to 185 (MEDSMDMDMS…DDDDFDEEET (185 aa)). At Ser-4 the chain carries Phosphoserine; by PLK1 and PLK2. The residue at position 10 (Ser-10) is a Phosphoserine. A Glycyl lysine isopeptide (Lys-Gly) (interchain with G-Cter in SUMO2) cross-link involves residue Lys-27. At Lys-32 the chain carries N6-acetyllysine; alternate. Lys-32 is covalently cross-linked (Glycyl lysine isopeptide (Lys-Gly) (interchain with G-Cter in SUMO1); alternate). Residue Lys-32 forms a Glycyl lysine isopeptide (Lys-Gly) (interchain with G-Cter in SUMO2); alternate linkage. Ser-43 is modified (phosphoserine). Position 67 is a phosphotyrosine (Tyr-67). A Phosphoserine modification is found at Ser-70. Thr-75 and Thr-95 each carry phosphothreonine. Ser-125 and Ser-139 each carry phosphoserine. The segment at 138 to 248 (MSGKRSAPGG…PSSVEDIKAK (111 aa)) is disordered. Residue Lys-141 forms a Glycyl lysine isopeptide (Lys-Gly) (interchain with G-Cter in SUMO2) linkage. Lys-150 is subject to N6-acetyllysine; alternate. Lys-150 is covalently cross-linked (Glycyl lysine isopeptide (Lys-Gly) (interchain with G-Cter in SUMO2); alternate). The Nuclear localization signal motif lies at 152-157 (PQKKVK). Lys-154 bears the N6-acetyllysine mark. A compositionally biased stretch (acidic residues) spans 159 to 186 (DEDDEDDDEDDEDDEDDDDDDFDEEETE). The interval 186-214 (EEKVPVKKSVRDTPAKNAQKSNQNGKDLK) is interaction with NOP2. Positions 187-199 (EKVPVKKSVRDTP) are enriched in basic and acidic residues. A Nuclear localization signal motif is present at residues 190 to 196 (PVKKSVR). Thr-198 carries the post-translational modification Phosphothreonine; by CDK1 and CDK2. Residues 201–210 (KNAQKSNQNG) show a composition bias toward polar residues. Ser-206 bears the ADP-ribosylserine mark. The residue at position 211 (Lys-211) is an N6-acetyllysine. Residue Lys-214 forms a Glycyl lysine isopeptide (Lys-Gly) (interchain with G-Cter in SUMO2) linkage. Phosphothreonine; by CDK1 is present on Thr-217. Positions 221–233 (KGQESFKKQEKTP) are enriched in basic and acidic residues. Ser-225 carries the phosphoserine modification. Lys-227 bears the N6-acetyllysine mark. N6-acetyllysine; alternate is present on Lys-228. Residue Lys-228 forms a Glycyl lysine isopeptide (Lys-Gly) (interchain with G-Cter in SUMO); alternate linkage. Residues Thr-232 and Thr-235 each carry the phosphothreonine; by CDK1 modification. A phosphoserine mark is found at Ser-240 and Ser-241. The required for nucleolar localization stretch occupies residues 241 to 292 (SVEDIKAKMQASIEKGGSLPKVEAKFINYVKNCFRMTDQEAIQDLWQWRKSL). Residue Lys-246 forms a Glycyl lysine isopeptide (Lys-Gly) (interchain with G-Cter in SUMO1); alternate linkage. Glycyl lysine isopeptide (Lys-Gly) (interchain with G-Cter in SUMO2); alternate cross-links involve residues Lys-246 and Lys-248. Lys-248 carries the N6-acetyllysine; alternate modification. Ser-252 is subject to Phosphoserine. N6-acetyllysine; alternate is present on Lys-255. Residue Lys-255 forms a Glycyl lysine isopeptide (Lys-Gly) (interchain with G-Cter in SUMO1); alternate linkage. A Glycyl lysine isopeptide (Lys-Gly) (interchain with G-Cter in SUMO2); alternate cross-link involves residue Lys-255. Residue Ser-258 is modified to Phosphoserine. Glycyl lysine isopeptide (Lys-Gly) (interchain with G-Cter in SUMO2); alternate cross-links involve residues Lys-261, Lys-265, and Lys-271. Lys-261 participates in a covalent cross-link: Glycyl lysine isopeptide (Lys-Gly) (interchain with G-Cter in SUMO); alternate. N6-acetyllysine; alternate is present on residues Lys-265 and Lys-271. A Glycyl lysine isopeptide (Lys-Gly) (interchain with G-Cter in SUMO1); alternate cross-link involves residue Lys-265. Lys-265 carries the N6-succinyllysine; alternate modification. Thr-277 is subject to Phosphothreonine. The residue at position 290 (Lys-290) is an N6-acetyllysine.

The protein belongs to the nucleoplasmin family. Decamer formed by two pentameric rings associated in a head-to-head fashion. Disulfide-linked dimers under certain conditions. Interacts with NSUN2 and SENP3. The SWAP complex consists of NPM1, NCL, PARP1 and SWAP70. Interacts with the methylated form of RPS10. Interacts (via N-terminal domain) with APEX1; the interaction is RNA-dependent and decreases peroxide-damaged cells. Interacts with NEK2. Interacts with ROCK2 and BRCA2. Interacts with RPGR. Interacts with CENPW. Interacts with EIF2AK2/PKR. Interacts with DDX31; this interaction prevents interaction between NPM1 and HDM2. Interacts with MYC; competitive with NOP53. Interacts with NOP53; the interaction is direct and competitive with MYC. Interacts with LRRC34. Interacts with RRP1B. Interacts with NPM3. Interacts with ALKBH2. Interacts with TTF1 (via C-terminal region). Interacts with NOP2. Interacts with ARID3C (via REKLES DOMAIN); the interaction mediates ARID3C nuclear shuttling. Acetylated at C-terminal lysine residues, thereby increasing affinity to histones. Post-translationally, ADP-ribosylated. In terms of processing, phosphorylated at Ser-4 by PLK1 and PLK2. Phosphorylation at Ser-4 by PLK2 in S phase is required for centriole duplication and is sufficient to trigger centriole replication. Phosphorylation at Ser-4 by PLK1 takes place during mitosis. Phosphorylated by CDK2 at Ser-125 and Thr-198. Phosphorylation at Thr-198 may trigger initiation of centrosome duplication. Phosphorylated by CDK1 at Thr-198, Thr-217, Thr-232 and Thr-235 during cell mitosis. When these four sites are phosphorated, RNA-binding activity seem to be abolished. May be phosphorylated at Ser-70 by NEK2. The Thr-198 phosphorylated form has higher affinity for ROCK2. Sumoylated by ARF. Post-translationally, ubiquitinated. Ubiquitination leads to proteasomal degradation. Deubiquitinated by USP36. In terms of tissue distribution, expressed in B-cells that have been induced to switch to various Ig isotypes.

The protein resides in the nucleus. Its subcellular location is the nucleolus. It is found in the nucleoplasm. The protein localises to the cytoplasm. It localises to the cytoskeleton. The protein resides in the microtubule organizing center. Its subcellular location is the centrosome. Involved in diverse cellular processes such as ribosome biogenesis, centrosome duplication, protein chaperoning, histone assembly, cell proliferation, and regulation of tumor suppressors p53/TP53 and ARF. Binds ribosome presumably to drive ribosome nuclear export. Associated with nucleolar ribonucleoprotein structures and bind single-stranded nucleic acids. Acts as a chaperonin for the core histones H3, H2B and H4. Stimulates APEX1 endonuclease activity on apurinic/apyrimidinic (AP) double-stranded DNA but inhibits APEX1 endonuclease activity on AP single-stranded RNA. May exert a control of APEX1 endonuclease activity within nucleoli devoted to repair AP on rDNA and the removal of oxidized rRNA molecules. In concert with BRCA2, regulates centrosome duplication. Regulates centriole duplication: phosphorylation by PLK2 is able to trigger centriole replication. Negatively regulates the activation of EIF2AK2/PKR and suppresses apoptosis through inhibition of EIF2AK2/PKR autophosphorylation. Antagonizes the inhibitory effect of ATF5 on cell proliferation and relieves ATF5-induced G2/M blockade. In complex with MYC enhances the transcription of MYC target genes. May act as chaperonin or cotransporter in the nucleolar localization of transcription termination factor TTF1. The protein is Nucleophosmin (Npm1) of Mus musculus (Mouse).